Reading from the N-terminus, the 101-residue chain is NADH-quinone oxidoreductase subunit K (101 aa).

Transmembrane regions (helical) follow at residues 4-24 (LSHYLTVAAILFTLGVLGIFI), 30-50 (IVILMCVELILLAVNINLVAF), and 65-85 (FVLTVAAAEAAIGLAILVVFF).

It belongs to the complex I subunit 4L family. In terms of assembly, NDH-1 is composed of 14 different subunits. Subunits NuoA, H, J, K, L, M, N constitute the membrane sector of the complex.

It is found in the cell inner membrane. It catalyses the reaction a quinone + NADH + 5 H(+)(in) = a quinol + NAD(+) + 4 H(+)(out). Its function is as follows. NDH-1 shuttles electrons from NADH, via FMN and iron-sulfur (Fe-S) centers, to quinones in the respiratory chain. The immediate electron acceptor for the enzyme in this species is believed to be ubiquinone. Couples the redox reaction to proton translocation (for every two electrons transferred, four hydrogen ions are translocated across the cytoplasmic membrane), and thus conserves the redox energy in a proton gradient. The sequence is that of NADH-quinone oxidoreductase subunit K from Methylobacterium sp. (strain 4-46).